Consider the following 210-residue polypeptide: Noranthrone monooxygenase (210 aa).

Helical transmembrane passes span 59–79 (TGSFLTGAMMNLHLLTIPILI), 105–125 (GIALVTGALYGYAAWAKYSVG), 131–151 (WMVAGVTTVSMVPYTWMFMNA), and 188–208 (VRALFPLAGSVMGMLGVCGVV).

Belongs to the anthrone oxygenase family.

It is found in the membrane. The enzyme catalyses noranthrone + O2 = norsolorinic acid + H2O. It functions in the pathway mycotoxin biosynthesis; aflatoxin biosynthesis. In terms of biological role, monooxygenase that converts norsolorinic acid anthrone to norsolorinic acid during aflatoxin biosynthesis. The protein is Noranthrone monooxygenase (hypC) of Aspergillus flavus (strain ATCC 200026 / FGSC A1120 / IAM 13836 / NRRL 3357 / JCM 12722 / SRRC 167).